The following is a 352-amino-acid chain: MSVSNSASPSSLSYRDAGVDIEAGDALVDRIKPFAKRTMRPEVLGGIGGFGALFELSKKFKEPVLVSGTDGVGTKLKLAFQLNKHDTVGQDLVAMSVNDILVQGAEPLFFLDYFACGKLDVDTAADVVKGIAHGCELAGCALIGGETAEMPSMYPEGEYDLAGFAVGAVEKADIIDGSKIVPGDVVLGLASSGAHSNGYSLVRKIIEVAKPDLDADFHGRTFRDVVMEPTRIYVKPLLALMQAMPGVVKGMAHITGGGITENVPRILRDELTARIDAASWTLPPLFQWLQQAGNVDTQEMYRVFNCGIGMAVVVAADVADAVAAQLTAAGETVYRIGRIDSRKDGEAQTIVA.

It belongs to the AIR synthase family.

It is found in the cytoplasm. The enzyme catalyses 2-formamido-N(1)-(5-O-phospho-beta-D-ribosyl)acetamidine + ATP = 5-amino-1-(5-phospho-beta-D-ribosyl)imidazole + ADP + phosphate + H(+). It participates in purine metabolism; IMP biosynthesis via de novo pathway; 5-amino-1-(5-phospho-D-ribosyl)imidazole from N(2)-formyl-N(1)-(5-phospho-D-ribosyl)glycinamide: step 2/2. The protein is Phosphoribosylformylglycinamidine cyclo-ligase of Azoarcus sp. (strain BH72).